Consider the following 172-residue polypeptide: Crossover junction endodeoxyribonuclease RuvC (172 aa).

Active-site residues include D7, E67, and D140. Mg(2+)-binding residues include D7, E67, and D140.

This sequence belongs to the RuvC family. As to quaternary structure, homodimer which binds Holliday junction (HJ) DNA. The HJ becomes 2-fold symmetrical on binding to RuvC with unstacked arms; it has a different conformation from HJ DNA in complex with RuvA. In the full resolvosome a probable DNA-RuvA(4)-RuvB(12)-RuvC(2) complex forms which resolves the HJ. The cofactor is Mg(2+).

The protein resides in the cytoplasm. It catalyses the reaction Endonucleolytic cleavage at a junction such as a reciprocal single-stranded crossover between two homologous DNA duplexes (Holliday junction).. In terms of biological role, the RuvA-RuvB-RuvC complex processes Holliday junction (HJ) DNA during genetic recombination and DNA repair. Endonuclease that resolves HJ intermediates. Cleaves cruciform DNA by making single-stranded nicks across the HJ at symmetrical positions within the homologous arms, yielding a 5'-phosphate and a 3'-hydroxyl group; requires a central core of homology in the junction. The consensus cleavage sequence is 5'-(A/T)TT(C/G)-3'. Cleavage occurs on the 3'-side of the TT dinucleotide at the point of strand exchange. HJ branch migration catalyzed by RuvA-RuvB allows RuvC to scan DNA until it finds its consensus sequence, where it cleaves and resolves the cruciform DNA. This Syntrophomonas wolfei subsp. wolfei (strain DSM 2245B / Goettingen) protein is Crossover junction endodeoxyribonuclease RuvC.